The primary structure comprises 758 residues: Relaxin receptor 1 (758 aa).

The Extracellular portion of the chain corresponds to 1–408; that stretch reads MTSGPFFFCV…LENLLASIIQ (408 aa). One can recognise an LDL-receptor class A domain in the interval 26 to 63; the sequence is SCPLGSFPCGNISKCLPQLLHCNGVDDCGNQADEDNCG. 3 cysteine pairs are disulfide-bonded: C27–C40, C34–C53, and C47–C62. An N-linked (GlcNAc...) asparagine glycan is attached at N36. L45, N48, V50, D52, D58, and E59 together coordinate Ca(2+). 11 LRR repeats span residues 105-125, 126-148, 149-172, 173-196, 198-220, 221-244, 246-269, 270-293, 294-317, 319-341, and 342-365; these read LCRD…PSVS, SNVT…SFRK, YHDL…AFRG, LHSL…VFED, HRLE…TFYG, LNSL…PLCQ, MPRL…TFIS, CNNL…AFTH, LQKL…IFKD, KELS…QFDY, and LAKL…MFRP. N-linked (GlcNAc...) asparagine glycosylation occurs at N127. N264 and N272 each carry an N-linked (GlcNAc...) asparagine glycan. An N-linked (GlcNAc...) asparagine glycan is attached at N325. N-linked (GlcNAc...) asparagine glycosylation occurs at N368. The chain crosses the membrane as a helical span at residues 409 to 429; sequence RVFVWVVSAITCFGNIFVICM. At 430–443 the chain is on the cytoplasmic side; that stretch reads RPYIRSENKLHAMS. A helical membrane pass occupies residues 444 to 464; the sequence is IMSLCCADCLMGVYLFVIGAF. Topologically, residues 465-486 are extracellular; the sequence is DLKFRGEYRKHAQPWMESVHCQ. Cysteines 485 and 563 form a disulfide. The chain crosses the membrane as a helical span at residues 487–507; the sequence is FMGSLAVLSTEVSVLLLTFLT. Topologically, residues 508–527 are cytoplasmic; sequence LEKYICIVYPFRCLRPRKCR. The helical transmembrane segment at 528–548 threads the bilayer; the sequence is TVAVLIFIWITGFIVAFAPLG. The Extracellular portion of the chain corresponds to 549–577; it reads NKEFFKNYYGTNGVCFPLHSEDTGSTGAQ. Residues 578-598 traverse the membrane as a helical segment; sequence IYSVVIFLGINLVAFIIIVFS. Topologically, residues 599–629 are cytoplasmic; that stretch reads YGSMFYSVHQSTITATEIQKQVKKEMILAKR. A helical transmembrane segment spans residues 630–650; the sequence is FFFIVFTDALCWIPIFILKFL. The Extracellular segment spans residues 651-660; sequence SLIRVEIPDT. The helical transmembrane segment at 661–681 threads the bilayer; the sequence is ITSWVVIFILPINSALNPIIY. At 682 to 758 the chain is on the cytoplasmic side; that stretch reads TLTTRPFKEM…SRSSRLNSYS (77 aa).

It belongs to the G-protein coupled receptor 1 family. As to quaternary structure, interacts with C1QTNF8. As to expression, detected in brain cortex, and at low levels in testis.

It localises to the cell membrane. Its function is as follows. Receptor for relaxins. The activity of this receptor is mediated by G proteins leading to stimulation of adenylate cyclase and an increase of cAMP. Binding of the ligand may also activate a tyrosine kinase pathway that inhibits the activity of a phosphodiesterase that degrades cAMP. The protein is Relaxin receptor 1 (Rxfp1) of Rattus norvegicus (Rat).